The sequence spans 317 residues: Large ribosomal subunit protein uL10 (317 aa).

Over residues S280–A290 the composition is skewed to low complexity. The segment at S280–D317 is disordered. Basic and acidic residues predominate over residues T291 to S302. S302 is subject to Phosphoserine. S304 is modified (phosphoserine; by CK1).

The protein belongs to the universal ribosomal protein uL10 family. In terms of assembly, P0 forms a pentameric complex by interaction with dimers of P1 and P2.

It localises to the cytoplasm. The protein resides in the nucleus. Its function is as follows. Ribosomal protein P0 is the functional equivalent of E.coli protein L10. The chain is Large ribosomal subunit protein uL10 (RpLP0) from Drosophila melanogaster (Fruit fly).